Here is a 103-residue protein sequence, read N- to C-terminus: Small ribosomal subunit protein uS10 (103 aa).

The protein belongs to the universal ribosomal protein uS10 family. As to quaternary structure, part of the 30S ribosomal subunit.

Functionally, involved in the binding of tRNA to the ribosomes. In Saccharophagus degradans (strain 2-40 / ATCC 43961 / DSM 17024), this protein is Small ribosomal subunit protein uS10.